A 471-amino-acid chain; its full sequence is 3-isopropylmalate dehydratase large subunit (471 aa).

Residues Cys347, Cys407, and Cys410 each coordinate [4Fe-4S] cluster.

This sequence belongs to the aconitase/IPM isomerase family. LeuC type 1 subfamily. In terms of assembly, heterodimer of LeuC and LeuD. It depends on [4Fe-4S] cluster as a cofactor.

It catalyses the reaction (2R,3S)-3-isopropylmalate = (2S)-2-isopropylmalate. The protein operates within amino-acid biosynthesis; L-leucine biosynthesis; L-leucine from 3-methyl-2-oxobutanoate: step 2/4. Its function is as follows. Catalyzes the isomerization between 2-isopropylmalate and 3-isopropylmalate, via the formation of 2-isopropylmaleate. This Edwardsiella ictaluri (strain 93-146) protein is 3-isopropylmalate dehydratase large subunit.